Reading from the N-terminus, the 200-residue chain is Adenylate kinase (200 aa).

10–15 (GAGKGT) lines the ATP pocket. Positions 30 to 59 (STGDMLRAAVAAETPVGLEAKAIMESGGLV) are NMP. AMP-binding positions include T31, R36, 57–59 (GLV), 85–88 (GFPR), and Q92. Positions 126 to 142 (KRAEETAARGQPVRKDD) are LID. R127 lines the ATP pocket. AMP contacts are provided by R139 and R150. K178 provides a ligand contact to ATP.

It belongs to the adenylate kinase family. Monomer.

Its subcellular location is the cytoplasm. It catalyses the reaction AMP + ATP = 2 ADP. The protein operates within purine metabolism; AMP biosynthesis via salvage pathway; AMP from ADP: step 1/1. In terms of biological role, catalyzes the reversible transfer of the terminal phosphate group between ATP and AMP. Plays an important role in cellular energy homeostasis and in adenine nucleotide metabolism. The protein is Adenylate kinase of Methylorubrum extorquens (strain PA1) (Methylobacterium extorquens).